The sequence spans 919 residues: Translocase of chloroplast 101, chloroplastic (919 aa).

Disordered stretches follow at residues 20 to 47 and 64 to 211; these read SASR…VIEG and VDDE…NETR. Positions 73 to 88 are enriched in basic and acidic residues; sequence SENKAVVETEKVESKP. The segment covering 96-128 has biased composition (acidic residues); sequence FAEEDGDSDADAEDEDDEDDEDDDEDDDDEDDK. The span at 182 to 207 shows a compositional bias: polar residues; it reads QRPNGAPSTQLTATTEENANSDTAEG. An AIG1-type G domain is found at 284–513; it reads DFACTILVLG…KLQETATPGR (230 aa). Residues 293–300 form a G1 region; that stretch reads GKTGVGKS. Residue 296–301 participates in GTP binding; the sequence is GVGKSA. Ser-300 contributes to the Mg(2+) binding site. Residues 319 to 323 are G2; that stretch reads PSTNK. The interval 340-343 is G3; sequence DTPG. Residues 412–415 are G4; the sequence is THAS. Residues His-413 and 461-462 contribute to the GTP site; that span reads EN. A G5 region spans residues 461-463; that stretch reads ENH. Disordered stretches follow at residues 540-585 and 611-650; these read LPDE…LTKE and RRRK…PMPD. Positions 543–567 are enriched in acidic residues; it reads EQLDESDESDDDEEEEDSEADDYDE. The segment covering 574-585 has biased composition (basic and acidic residues); sequence LSKEELEELTKE. The span at 629–638 shows a compositional bias: acidic residues; that stretch reads AQPDEADDEA. Positions 641–650 are enriched in low complexity; sequence PAAVPVPMPD. The chain crosses the membrane as a helical span at residues 893-914; sequence MVLIGIVPILRSLINCRFGFGG.

Belongs to the TRAFAC class TrmE-Era-EngA-EngB-Septin-like GTPase superfamily. AIG1/Toc34/Toc159-like paraseptin GTPase family. TOC159 subfamily. As to quaternary structure, part of the TOC core complex. Mg(2+) serves as cofactor.

The protein resides in the plastid. Its subcellular location is the chloroplast outer membrane. Its function is as follows. GTPase involved in protein precursor import into chloroplasts. Seems to recognize chloroplast-destined precursor proteins and regulate their presentation to the translocation channel through GTP hydrolysis. Probably specialized in the import of nuclear encoded non-photosynthetic preproteins from the cytoplasm to the chloroplast. The polypeptide is Translocase of chloroplast 101, chloroplastic (Physcomitrium patens (Spreading-leaved earth moss)).